The chain runs to 201 residues: UPF0301 protein Bpet0561 (201 aa).

The protein belongs to the UPF0301 (AlgH) family.

This chain is UPF0301 protein Bpet0561, found in Bordetella petrii (strain ATCC BAA-461 / DSM 12804 / CCUG 43448).